A 361-amino-acid chain; its full sequence is Molybdenum import ATP-binding protein ModC 1 (361 aa).

The ABC transporter domain maps to 1 to 237 (MPADGIRARF…LDLPTAFHED (237 aa)). 35-42 (GHSGSGKT) serves as a coordination point for ATP. Residues 296–361 (DSSITNVLPA…AQIKAVALLG (66 aa)) form the Mop domain.

The protein belongs to the ABC transporter superfamily. Molybdate importer (TC 3.A.1.8) family. The complex is composed of two ATP-binding proteins (ModC), two transmembrane proteins (ModB) and a solute-binding protein (ModA).

The protein localises to the cell inner membrane. It carries out the reaction molybdate(out) + ATP + H2O = molybdate(in) + ADP + phosphate + H(+). In terms of biological role, part of the ABC transporter complex ModABC involved in molybdenum import. Responsible for energy coupling to the transport system. The sequence is that of Molybdenum import ATP-binding protein ModC 1 from Azotobacter vinelandii.